A 148-amino-acid chain; its full sequence is MTITQVKIKKLENFSGSLPEYATEHSAGMDLIAANEQPITIKAGEIQLIPTGIAIALPDSFEAQIRPRSGLAVKHGITVANSPGTIDADYRGEIKVILINLGKEDFVIEKGMRIAQMIIAKYERILWEESSSLTETMRGSGGFGSTGV.

Residues Arg68–Gly70, Asn81, Thr85–Asp87, and Lys95 each bind substrate.

Belongs to the dUTPase family. It depends on Mg(2+) as a cofactor.

It catalyses the reaction dUTP + H2O = dUMP + diphosphate + H(+). It functions in the pathway pyrimidine metabolism; dUMP biosynthesis; dUMP from dCTP (dUTP route): step 2/2. Functionally, this enzyme is involved in nucleotide metabolism: it produces dUMP, the immediate precursor of thymidine nucleotides and it decreases the intracellular concentration of dUTP so that uracil cannot be incorporated into DNA. This chain is Deoxyuridine 5'-triphosphate nucleotidohydrolase, found in Rickettsia felis (strain ATCC VR-1525 / URRWXCal2) (Rickettsia azadi).